Reading from the N-terminus, the 505-residue chain is N-succinylglutamate 5-semialdehyde dehydrogenase (505 aa).

NAD(+) is bound at residue glycine 234–glycine 239. Active-site residues include glutamate 257 and cysteine 291.

This sequence belongs to the aldehyde dehydrogenase family. AstD subfamily.

It carries out the reaction N-succinyl-L-glutamate 5-semialdehyde + NAD(+) + H2O = N-succinyl-L-glutamate + NADH + 2 H(+). Its pathway is amino-acid degradation; L-arginine degradation via AST pathway; L-glutamate and succinate from L-arginine: step 4/5. Catalyzes the NAD-dependent reduction of succinylglutamate semialdehyde into succinylglutamate. This Yersinia pestis bv. Antiqua (strain Antiqua) protein is N-succinylglutamate 5-semialdehyde dehydrogenase.